The sequence spans 32 residues: Trypsin inhibitor 3 (32 aa).

Disulfide bonds link C6–C23, C13–C25, and C19–C31.

This sequence belongs to the protease inhibitor I7 (squash-type serine protease inhibitor) family.

It localises to the secreted. In terms of biological role, inhibits trypsin. This Cucurbita pepo (Vegetable marrow) protein is Trypsin inhibitor 3.